Reading from the N-terminus, the 158-residue chain is Class 10 plant pathogenesis-related protein 2B (158 aa).

Residue Asp-8 coordinates trans-zeatin. 3 residues coordinate Ca(2+): Pro-32, Val-35, and Ile-38. Trans-zeatin-binding residues include Glu-60, His-69, Tyr-81, and Tyr-83. Position 83 (Tyr-83) interacts with melatonin.

Belongs to the BetVI family.

Its subcellular location is the cytoplasm. The protein localises to the cytosol. Its function is as follows. Class II ribonuclease (RNase). Binds to several cytokinins including natural adenine-type (e.g. trans-zeatin and kinetin) and artificial urea-type (e.g. N,N'-diphenylurea and N-phenyl-N'-(2-chloro-4-pyridyl)urea) hormones. Interacts with melatonin. In Lupinus luteus (European yellow lupine), this protein is Class 10 plant pathogenesis-related protein 2B.